A 179-amino-acid polypeptide reads, in one-letter code: Adenine phosphoribosyltransferase (179 aa).

Belongs to the purine/pyrimidine phosphoribosyltransferase family. Homodimer.

The protein resides in the cytoplasm. It carries out the reaction AMP + diphosphate = 5-phospho-alpha-D-ribose 1-diphosphate + adenine. Its pathway is purine metabolism; AMP biosynthesis via salvage pathway; AMP from adenine: step 1/1. Its function is as follows. Catalyzes a salvage reaction resulting in the formation of AMP, that is energically less costly than de novo synthesis. In Bradyrhizobium sp. (strain BTAi1 / ATCC BAA-1182), this protein is Adenine phosphoribosyltransferase.